We begin with the raw amino-acid sequence, 262 residues long: MGPPPAAPAAAAELFGPRLAAAERFTELLATAGVERGLIGPRETDRLWERHVINCGVLAEVVPEGADAVDVGSGAGLPGIPLALARPDVRVVLLEPMERRCRFLQEVVAAVGLEEQVSVLRGRAPDAGIGPEGRRFGVAVARAVAPLERLGAILLPMLQPGGVMLAMRGSRILEELQDARGSLGTQGWHPVDVVVCGEGRVDEPTRVLRAVRSSQLSRAEGRKGRGDGERHDGRQVRRTARDSRRSREVDRDQPTRGQSRST.

S-adenosyl-L-methionine is bound by residues Gly72, Leu77, and Arg142. The segment at 212-262 (RSSQLSRAEGRKGRGDGERHDGRQVRRTARDSRRSREVDRDQPTRGQSRST) is disordered. The segment covering 219–254 (AEGRKGRGDGERHDGRQVRRTARDSRRSREVDRDQP) has biased composition (basic and acidic residues).

This sequence belongs to the methyltransferase superfamily. RNA methyltransferase RsmG family.

It localises to the cytoplasm. Specifically methylates the N7 position of guanine in position 518 of 16S rRNA. The polypeptide is Ribosomal RNA small subunit methyltransferase G (Frankia alni (strain DSM 45986 / CECT 9034 / ACN14a)).